The following is a 963-amino-acid chain: Probable sucrose-phosphate synthase 2 (963 aa).

Residues K111–K150 are disordered.

It belongs to the glycosyltransferase 1 family. In terms of assembly, homodimer or homotetramer. Expressed in germinating seeds.

It catalyses the reaction beta-D-fructose 6-phosphate + UDP-alpha-D-glucose = sucrose 6(F)-phosphate + UDP + H(+). It participates in glycan biosynthesis; sucrose biosynthesis; sucrose from D-fructose 6-phosphate and UDP-alpha-D-glucose: step 1/2. With respect to regulation, activity is regulated by phosphorylation and moderated by concentration of metabolites and light. Functionally, plays a role in photosynthetic sucrose synthesis by catalyzing the rate-limiting step of sucrose biosynthesis from UDP-glucose and fructose- 6-phosphate. Involved in the regulation of carbon partitioning in the leaves of plants. May regulate the synthesis of sucrose and therefore play a major role as a limiting factor in the export of photoassimilates out of the leaf. Plays a role for sucrose availability that is essential for plant growth and fiber elongation. The polypeptide is Probable sucrose-phosphate synthase 2 (SPS2) (Oryza sativa subsp. japonica (Rice)).